Reading from the N-terminus, the 151-residue chain is Arginine repressor (151 aa).

It belongs to the ArgR family.

The protein resides in the cytoplasm. It participates in amino-acid biosynthesis; L-arginine biosynthesis [regulation]. In terms of biological role, regulates arginine biosynthesis genes. This Lachnospira eligens (strain ATCC 27750 / DSM 3376 / VPI C15-48 / C15-B4) (Eubacterium eligens) protein is Arginine repressor.